We begin with the raw amino-acid sequence, 215 residues long: Large ribosomal subunit protein bL25 (215 aa).

Residues 160–215 are disordered; it reads GDLPLPEGSELVTEPEETVMSVVAPETEEEPDTEEDEEGEEDVEEESEEEEEESEE. Over residues 185-215 the composition is skewed to acidic residues; sequence ETEEEPDTEEDEEGEEDVEEESEEEEEESEE.

It belongs to the bacterial ribosomal protein bL25 family. CTC subfamily. In terms of assembly, part of the 50S ribosomal subunit; part of the 5S rRNA/L5/L18/L25 subcomplex. Contacts the 5S rRNA. Binds to the 5S rRNA independently of L5 and L18.

Functionally, this is one of the proteins that binds to the 5S RNA in the ribosome where it forms part of the central protuberance. The protein is Large ribosomal subunit protein bL25 of Natranaerobius thermophilus (strain ATCC BAA-1301 / DSM 18059 / JW/NM-WN-LF).